Reading from the N-terminus, the 222-residue chain is uncharacterized protein (222 aa).

The stretch at 43–73 forms a coiled coil; the sequence is SQNEEFEYEMERMLSILNEQTMDLTQLQSRI.

This is an uncharacterized protein from Rickettsia conorii (strain ATCC VR-613 / Malish 7).